The primary structure comprises 460 residues: Argininosuccinate lyase (460 aa).

It belongs to the lyase 1 family. Argininosuccinate lyase subfamily.

The protein resides in the cytoplasm. It carries out the reaction 2-(N(omega)-L-arginino)succinate = fumarate + L-arginine. It participates in amino-acid biosynthesis; L-arginine biosynthesis; L-arginine from L-ornithine and carbamoyl phosphate: step 3/3. In Buchnera aphidicola subsp. Cinara cedri (strain Cc), this protein is Argininosuccinate lyase.